A 599-amino-acid polypeptide reads, in one-letter code: MVLENIRNFSIIAHIDHGKSTLADRLLEYTGALSEREMQNQFLDKMDLERERGITIKAQAVRLNYRAANGKDYILNLIDTPGHVDFTYEVSRSLSACEGALLVVDASQGVEAQTLANVYLALENDLDVFPVLNKIDLPAADPERVKQEIEDIIGLDAHDAVLASAKEGIGTREILEEIVTKIPPPQGDSNKPLKALLFDSWYDQYQGVIVLVRILDGMVKKGDKIQLMSNRRNYEVLKVGVFSPAMCEVAALSAGEVGFIIAGIKDVQDAKVGDTITSLHNPCDGPLPGFKEVQPMVFSGLYPIDTSQYEQLRDALAKLKLNDSSFSYEPETSLALGFGFRCGFLGLLHMEIIQERLEREFNLDLITTAPTVVYKVHRLDGSIITIESANQLPPVQEIQYVEEPFILASIHVPNEFVGGILALCEEKRGVQREIKYLTPTRVMVIYELPLNEVVLDFYDRLKSITKGYASLDYEHLDYRRSNLERLNIMINGEVVDALSLIIHKDKAYFRGRDLVSKMKELIPRQMFEIAIQAAIGNKVIARETVKAMRKDVLAKCYGGDITRKRKLLEKQKEGKKRMKNVGNVELPQEAFLAILKVEG.

The tr-type G domain occupies 4-186; it reads ENIRNFSIIA…EIVTKIPPPQ (183 aa). GTP-binding positions include 16–21 and 133–136; these read DHGKST and NKID.

Belongs to the TRAFAC class translation factor GTPase superfamily. Classic translation factor GTPase family. LepA subfamily.

It is found in the cell inner membrane. The catalysed reaction is GTP + H2O = GDP + phosphate + H(+). Its function is as follows. Required for accurate and efficient protein synthesis under certain stress conditions. May act as a fidelity factor of the translation reaction, by catalyzing a one-codon backward translocation of tRNAs on improperly translocated ribosomes. Back-translocation proceeds from a post-translocation (POST) complex to a pre-translocation (PRE) complex, thus giving elongation factor G a second chance to translocate the tRNAs correctly. Binds to ribosomes in a GTP-dependent manner. The chain is Elongation factor 4 from Geotalea uraniireducens (strain Rf4) (Geobacter uraniireducens).